We begin with the raw amino-acid sequence, 657 residues long: Filensin (657 aa).

Residues 1–38 form a head region; sequence MYRSSFLREVRKEKYERSDAYDELRGSPEFDSLAQAQG. An IF rod domain is found at 38–318; it reads GLENLQELNE…RIIENEDSRL (281 aa). Positions 39 to 73 are coil 1A; sequence LENLQELNERFASYINRARVLEQRNTILRKQLETF. The interval 74–82 is linker 1; the sequence is QRMDELVGL. The segment at 83–182 is coil 1B; it reads DEAFAGQIEF…RYKKNLMEIQ (100 aa). Positions 183-199 are linker 12; it reads TYVNILQQIIQTTPRVS. Residues 200–318 form a coil 2 region; sequence PITTGISEEK…RIIENEDSRL (119 aa). Positions 319-657 are tail; that stretch reads NSAIAGTPVT…SKKKPGDKGS (339 aa). 2 disordered regions span residues 503–530 and 565–593; these read IGGDVEPIPELPEPSEPSEKEKRDICER and PDVSEPEAVPSPGLISPAEPGVLQETDHD. The segment covering 519 to 530 has biased composition (basic and acidic residues); the sequence is PSEKEKRDICER.

This sequence belongs to the intermediate filament family. In terms of tissue distribution, detected in eye lens fiber cells (at protein level). Detected in embryonic eye lens.

Its subcellular location is the cell membrane. It is found in the cytoplasm. The protein resides in the cytoskeleton. It localises to the cell cortex. Functionally, required for the correct formation of lens intermediate filaments. The polypeptide is Filensin (BFSP1) (Gallus gallus (Chicken)).